Here is a 275-residue protein sequence, read N- to C-terminus: Uronate dehydrogenase (275 aa).

NAD(+)-binding positions include 22–23, 42–44, 60–61, and 80–84; these read GL, DIA, DL, and FGGVS. Substrate contacts are provided by residues S84 and 120–122; that span reads SNH. Y145 functions as the Proton acceptor in the catalytic mechanism. K149 is a binding site for NAD(+). Position 174 (S174) interacts with substrate. Position 175 (S175) interacts with NAD(+). R183 provides a ligand contact to substrate.

This sequence belongs to the NAD(P)-dependent epimerase/dehydratase family. As to quaternary structure, homohexamer.

It carries out the reaction beta-D-galacturonate + NAD(+) = D-galactaro-1,5-lactone + NADH + H(+). It catalyses the reaction beta-D-glucuronate + NAD(+) = D-glucaro-1,5-lactone + NADH + H(+). The protein operates within carbohydrate acid metabolism; D-galacturonate degradation via prokaryotic oxidative pathway. Catalyzes the oxidation of beta-D-galacturonate and beta-D-glucuronate to galactarate and D-glucarate, respectively. Cannot use NADP(+) instead of NAD(+) as cosubstrate. In Pseudomonas syringae pv. tomato (strain ATCC BAA-871 / DC3000), this protein is Uronate dehydrogenase (udh).